Consider the following 475-residue polypeptide: uncharacterized protein (475 aa).

The helical transmembrane segment at 19–39 (IKVGVFFVAILLILTGILLTI) threads the bilayer. Disordered stretches follow at residues 55-79 (GEYH…NATS) and 330-350 (SSPF…PHKG). Residues 60-79 (LNTSPNENSTALQPDENATS) show a composition bias toward polar residues. Residues 336–348 (NRRHPVTGRIRPH) show a composition bias toward basic residues. H348 serves as a coordination point for Zn(2+).

It in the central section; belongs to the OapA family. The protein in the C-terminal section; belongs to the peptidase M23B family. Requires Zn(2+) as cofactor.

The protein resides in the cell membrane. This is an uncharacterized protein from Haemophilus influenzae (strain ATCC 51907 / DSM 11121 / KW20 / Rd).